The chain runs to 397 residues: Putative F-box protein At2g04810 (397 aa).

The region spanning 20 to 68 (SDWSKLCPDVLRKIYETLRSPVDSHRAKIVCSNWYSVWKTCVKRPLCPL) is the F-box domain.

The chain is Putative F-box protein At2g04810 from Arabidopsis thaliana (Mouse-ear cress).